Consider the following 231-residue polypeptide: 2,3,4,5-tetrahydropyridine-2,6-dicarboxylate N-acetyltransferase (231 aa).

This sequence belongs to the transferase hexapeptide repeat family. DapH subfamily.

The catalysed reaction is (S)-2,3,4,5-tetrahydrodipicolinate + acetyl-CoA + H2O = L-2-acetamido-6-oxoheptanedioate + CoA. It participates in amino-acid biosynthesis; L-lysine biosynthesis via DAP pathway; LL-2,6-diaminopimelate from (S)-tetrahydrodipicolinate (acetylase route): step 1/3. In terms of biological role, catalyzes the transfer of an acetyl group from acetyl-CoA to tetrahydrodipicolinate. The polypeptide is 2,3,4,5-tetrahydropyridine-2,6-dicarboxylate N-acetyltransferase (Thermosipho melanesiensis (strain DSM 12029 / CIP 104789 / BI429)).